The primary structure comprises 830 residues: Prolactin receptor (830 aa).

An N-terminal signal peptide occupies residues 1–23; that stretch reads MKQKLRSSVQIILLFALTAVGLT. Residues 24-439 are Extracellular-facing; that stretch reads GQSYPGKPKI…QIPTDFRIKD (416 aa). 4 consecutive Fibronectin type-III domains span residues 30–128, 129–228, 231–331, and 333–434; these read KPKI…VQPD, APVN…IPNG, PPEK…IVQT, and PPVN…IPTD. Residues Cys-36 and Cys-46 are joined by a disulfide bond. N-linked (GlcNAc...) asparagine glycosylation occurs at Asn-59. Cysteines 75 and 86 form a disulfide. Residues Asn-91, Asn-100, Asn-112, Asn-132, Asn-263, Asn-304, Asn-316, and Asn-336 are each glycosylated (N-linked (GlcNAc...) asparagine). Residues Asp-415 and His-417 each contribute to the Zn(2+) site. The short motif at 420 to 424 is the WSXWS motif element; it reads WSEWS. The chain crosses the membrane as a helical span at residues 440 to 460; the sequence is MVVWIIVGVLSSLICLVMSWT. Over 461 to 830 the chain is Cytoplasmic; it reads MVLKGYRMIA…DPSSFIPAFK (370 aa). Positions 472–480 match the Box 1 motif motif; it reads ILPPVPGPK.

The protein belongs to the type I cytokine receptor family. Type 1 subfamily.

The protein resides in the membrane. Functionally, this is a receptor for the anterior pituitary hormone prolactin. In Columba livia (Rock dove), this protein is Prolactin receptor (PRLR).